A 339-amino-acid polypeptide reads, in one-letter code: UDP-N-acetylglucosamine--N-acetylmuramyl-(pentapeptide) pyrophosphoryl-undecaprenol N-acetylglucosamine transferase (339 aa).

Residues 11–13, Asn-127, Arg-170, Ser-188, Ile-235, and Gln-280 contribute to the UDP-N-acetyl-alpha-D-glucosamine site; that span reads TGG.

The protein belongs to the glycosyltransferase 28 family. MurG subfamily.

It is found in the cell inner membrane. The enzyme catalyses di-trans,octa-cis-undecaprenyl diphospho-N-acetyl-alpha-D-muramoyl-L-alanyl-D-glutamyl-meso-2,6-diaminopimeloyl-D-alanyl-D-alanine + UDP-N-acetyl-alpha-D-glucosamine = di-trans,octa-cis-undecaprenyl diphospho-[N-acetyl-alpha-D-glucosaminyl-(1-&gt;4)]-N-acetyl-alpha-D-muramoyl-L-alanyl-D-glutamyl-meso-2,6-diaminopimeloyl-D-alanyl-D-alanine + UDP + H(+). Its pathway is cell wall biogenesis; peptidoglycan biosynthesis. Its function is as follows. Cell wall formation. Catalyzes the transfer of a GlcNAc subunit on undecaprenyl-pyrophosphoryl-MurNAc-pentapeptide (lipid intermediate I) to form undecaprenyl-pyrophosphoryl-MurNAc-(pentapeptide)GlcNAc (lipid intermediate II). The sequence is that of UDP-N-acetylglucosamine--N-acetylmuramyl-(pentapeptide) pyrophosphoryl-undecaprenol N-acetylglucosamine transferase from Thermotoga maritima (strain ATCC 43589 / DSM 3109 / JCM 10099 / NBRC 100826 / MSB8).